The following is a 618-amino-acid chain: Glucose starvation modulator protein 1 (618 aa).

Positions 20 to 48 (CEFCHTKHIQCDVGRPCQNCLKRNIGKFC) form a DNA-binding region, zn(2)-C6 fungal-type. The interval 325 to 352 (ANANTHPSHNAKLESECDSSSHSDADLE) is disordered. A compositionally biased stretch (basic and acidic residues) spans 335 to 352 (AKLESECDSSSHSDADLE). A PAS domain is found at 466–538 (LLDLENMAKL…QIFNELLAFG (73 aa)).

The protein belongs to the ERT1/acuK family.

Its subcellular location is the nucleus. Transcription factor which regulates nonfermentable carbon utilization. Binds specifically to 5'-CGGN(8)CGG-3' and 5'-CGGN(9)CGG-3' sequences in the promoter region. The protein is Glucose starvation modulator protein 1 (GSM1) of Saccharomyces cerevisiae (strain RM11-1a) (Baker's yeast).